A 359-amino-acid polypeptide reads, in one-letter code: Mitochondrial calcium uniporter regulator 1 (359 aa).

The Mitochondrial intermembrane segment spans residues Met-1–Pro-68. A helical transmembrane segment spans residues Leu-69–Pro-85. Over Arg-86–Lys-338 the chain is Mitochondrial matrix. Residues Glu-235–Ala-310 adopt a coiled-coil conformation. A helical membrane pass occupies residues Tyr-339–Trp-358. Ile-359 is a topological domain (mitochondrial intermembrane).

This sequence belongs to the CCDC90 family. In terms of assembly, interacts (via coiled coil regions) with MCU; the interaction is direct. Interacts with SMDT1/EMRE; the interaction is direct. Interacts with PPIF. Ubiquitously expressed.

It localises to the mitochondrion inner membrane. Functionally, key regulator of mitochondrial calcium uniporter (MCU) required for calcium entry into mitochondrion. Plays a direct role in uniporter-mediated calcium uptake via a direct interaction with MCU. Probably involved in the assembly of the membrane components of the uniporter complex (uniplex). This Homo sapiens (Human) protein is Mitochondrial calcium uniporter regulator 1.